Reading from the N-terminus, the 341-residue chain is Brain-specific homeobox/POU domain protein 3 (341 aa).

The POU-IV box motif lies at 55–65 (RGAEALAAVDI). The region spanning 182–259 (ETETDPRELE…ILEAWLEEAE (78 aa)) is the POU-specific domain. A DNA-binding region (homeobox) is located at residues 277–336 (KKRKRTSIAAPEKRSLEAYFAVQPRPSSEKIAAIAEKLDLKKNVVRVWFCNQRQKQKRMK).

The protein belongs to the POU transcription factor family. Class-4 subfamily.

Its subcellular location is the nucleus. Functionally, may play a role in specifying terminally differentiated neuronal phenotypes. The sequence is that of Brain-specific homeobox/POU domain protein 3 (BRN3) from Gallus gallus (Chicken).